Consider the following 232-residue polypeptide: Clarin-2 (232 aa).

A helical membrane pass occupies residues 10-30 (YGLASLLSFSSFILIIVALVV). N-linked (GlcNAc...) asparagine glycosylation occurs at Asn-48. The next 3 helical transmembrane spans lie at 101 to 121 (ILLL…FAIL), 139 to 159 (LWNV…VAAV), and 188 to 208 (SFWI…VVAI).

The protein belongs to the clarin family.

It is found in the cell projection. The protein resides in the stereocilium membrane. Functionally, plays a key role to hearing function. Required for normal organization and maintenance of the stereocilia bundle and for mechano-electrical transduction. This Homo sapiens (Human) protein is Clarin-2.